Reading from the N-terminus, the 193-residue chain is Corrinoid adenosyltransferase (193 aa).

Residues 5-13, Lys22, 130-135, and Asn154 each bind ATP; these read TKTGDKGQT and RRAERR.

It belongs to the Cob(I)alamin adenosyltransferase family. As to quaternary structure, homotrimer.

It localises to the cytoplasm. It catalyses the reaction 2 cob(II)yrinate a,c diamide + reduced [electron-transfer flavoprotein] + 2 ATP = 2 adenosylcob(III)yrinate a,c-diamide + 2 triphosphate + oxidized [electron-transfer flavoprotein] + 3 H(+). It carries out the reaction 2 cob(II)alamin + reduced [electron-transfer flavoprotein] + 2 ATP = 2 adenosylcob(III)alamin + 2 triphosphate + oxidized [electron-transfer flavoprotein] + 3 H(+). It participates in cofactor biosynthesis; adenosylcobalamin biosynthesis; adenosylcobalamin from cob(II)yrinate a,c-diamide: step 2/7. This chain is Corrinoid adenosyltransferase (yvqK), found in Bacillus subtilis (strain 168).